A 261-amino-acid chain; its full sequence is Glucanase inhibitor protein 3 (261 aa).

The N-terminal stretch at 1–21 is a signal peptide; sequence MKVLSSLAAALIALSAVDVEA. In terms of domain architecture, Peptidase S1 spans 29 to 260; it reads ILGGGKVPVG…GIEWINSVIK (232 aa). Cysteines 56 and 72 form a disulfide. N108 carries an N-linked (GlcNAc...) asparagine glycan. Disulfide bonds link C183–C195 and C205–C236.

This sequence belongs to the peptidase S1 family.

The protein localises to the secreted. Secreted effector that suppresses host plant glucan elicitor-mediated defense responses. Targets host endoglucanases and inhibits the endoglucanase-mediated release of elicitor-active glucan oligosaccharides from P.sojae cell walls. The chain is Glucanase inhibitor protein 3 (GIP3) from Phytophthora sojae (strain P6497) (Soybean stem and root rot agent).